Reading from the N-terminus, the 386-residue chain is Citrate synthase (386 aa).

Catalysis depends on residues His266 and Asp322.

The protein belongs to the citrate synthase family.

The catalysed reaction is oxaloacetate + acetyl-CoA + H2O = citrate + CoA + H(+). The protein operates within carbohydrate metabolism; tricarboxylic acid cycle; isocitrate from oxaloacetate: step 1/2. The polypeptide is Citrate synthase (gltA) (Acidithiobacillus ferridurans).